Reading from the N-terminus, the 136-residue chain is SNARE-associated protein Snapin (136 aa).

The residue at position 2 (Ala-2) is an N-acetylalanine. Phosphoserine is present on Ser-10. A Phosphothreonine modification is found at Thr-14. A coiled-coil region spans residues 37–126; the sequence is VQQLDSHVHA…TARRRAMLDS (90 aa). Position 50 is a phosphoserine; by PKA (Ser-50). The interaction with TOR1A stretch occupies residues 83 to 136; that stretch reads KKLLNARRRVVLVNNILQNAQERLRRLNHSVAKETARRRAMLDSGIYPPGSPGK. Ser-126 carries the post-translational modification Phosphoserine. Tyr-129 carries the phosphotyrosine modification. Ser-133 is modified (phosphoserine).

The protein belongs to the SNAPIN family. In terms of assembly, component of the biogenesis of lysosome-related organelles complex 1 (BLOC-1) composed of BLOC1S1, BLOC1S2, BLOC1S3, BLOC1S4, BLOC1S5, BLOC1S6, DTNBP1/BLOC1S7 and SNAPIN/BLOC1S8. Octamer composed of one copy each BLOC1S1, BLOC1S2, BLOC1S3, BLOC1S4, BLOC1S5, BLOC1S6, DTNBP1/BLOC1S7 and SNAPIN/BLOC1S8. The BLOC-1 complex associates with the AP-3 protein complex and membrane protein cargos. Component of the BLOC-one-related complex (BORC) which is composed of BLOC1S1, BLOC1S2, BORCS5, BORCS6, BORCS7, BORCS8, KXD1 and SNAPIN. Associates with the SNARE complex. Interacts with CSNK1D, SNAP23 and STX4A but not with STX1A, VAMP2 and SYT1. Interacts with SNAP25; the interaction with SNAP25 is increased by its phosphorylation. Interacts with CNTRL, NANOS1, PUM2 and RGS7. Interacts with TOR1A; the interaction is direct and associates SNAPIN with the CSN complex. As to quaternary structure, (Microbial infection) Interacts with human cytomegalovirus/HHV-5 protein UL70. In terms of processing, phosphorylated by CSNK1D/CK1. Phosphorylated by PKD, phosphorylation controls SNAPIN protein stability. As to expression, expressed in male germ cells of adult testis (at protein level).

Its subcellular location is the membrane. It is found in the cytoplasm. It localises to the cytosol. The protein localises to the perinuclear region. The protein resides in the golgi apparatus membrane. Its subcellular location is the lysosome membrane. It is found in the cytoplasmic vesicle. It localises to the secretory vesicle. The protein localises to the synaptic vesicle membrane. Component of the BLOC-1 complex, a complex that is required for normal biogenesis of lysosome-related organelles (LRO), such as platelet dense granules and melanosomes. In concert with the AP-3 complex, the BLOC-1 complex is required to target membrane protein cargos into vesicles assembled at cell bodies for delivery into neurites and nerve terminals. The BLOC-1 complex, in association with SNARE proteins, is also proposed to be involved in neurite extension. Plays a role in intracellular vesicle trafficking and synaptic vesicle recycling. May modulate a step between vesicle priming, fusion and calcium-dependent neurotransmitter release through its ability to potentiate the interaction of synaptotagmin with the SNAREs and the plasma-membrane-associated protein SNAP25. Its phosphorylation state influences exocytotic protein interactions and may regulate synaptic vesicle exocytosis. May also have a role in the mechanisms of SNARE-mediated membrane fusion in non-neuronal cells. As part of the BORC complex may play a role in lysosomes movement and localization at the cell periphery. Associated with the cytosolic face of lysosomes, the BORC complex may recruit ARL8B and couple lysosomes to microtubule plus-end-directed kinesin motor. The chain is SNARE-associated protein Snapin (SNAPIN) from Homo sapiens (Human).